A 540-amino-acid chain; its full sequence is CTP synthase (540 aa).

Residues 1–265 form an amidoligase domain region; that stretch reads MVRFIFITGG…DNKVLKFFNL (265 aa). Position 13 (serine 13) interacts with CTP. Residue serine 13 coordinates UTP. ATP is bound by residues 14–19 and aspartate 71; that span reads SLGKGL. 2 residues coordinate Mg(2+): aspartate 71 and glutamate 139. Residues 146-148, 186-191, and lysine 222 contribute to the CTP site; these read DIE and KTKPTQ. Residues 186-191 and lysine 222 contribute to the UTP site; that span reads KTKPTQ. Residues 290–539 enclose the Glutamine amidotransferase type-1 domain; it reads RIAIIAKYHK…VEAAIKYNKN (250 aa). Glycine 352 provides a ligand contact to L-glutamine. Residue cysteine 379 is the Nucleophile; for glutamine hydrolysis of the active site. L-glutamine contacts are provided by residues 380-383, glutamate 403, and arginine 467; that span reads LGMQ. Catalysis depends on residues histidine 512 and glutamate 514.

It belongs to the CTP synthase family. Homotetramer.

The enzyme catalyses UTP + L-glutamine + ATP + H2O = CTP + L-glutamate + ADP + phosphate + 2 H(+). It catalyses the reaction L-glutamine + H2O = L-glutamate + NH4(+). It carries out the reaction UTP + NH4(+) + ATP = CTP + ADP + phosphate + 2 H(+). It participates in pyrimidine metabolism; CTP biosynthesis via de novo pathway; CTP from UDP: step 2/2. Allosterically activated by GTP, when glutamine is the substrate; GTP has no effect on the reaction when ammonia is the substrate. The allosteric effector GTP functions by stabilizing the protein conformation that binds the tetrahedral intermediate(s) formed during glutamine hydrolysis. Inhibited by the product CTP, via allosteric rather than competitive inhibition. Its function is as follows. Catalyzes the ATP-dependent amination of UTP to CTP with either L-glutamine or ammonia as the source of nitrogen. Regulates intracellular CTP levels through interactions with the four ribonucleotide triphosphates. This is CTP synthase from Rickettsia bellii (strain RML369-C).